Reading from the N-terminus, the 98-residue chain is Cell cycle protein GpsB (98 aa).

The stretch at Leu-34–Met-71 forms a coiled coil.

It belongs to the GpsB family. Forms polymers through the coiled coil domains. Interacts with PBP1, MreC and EzrA.

It localises to the cytoplasm. In terms of biological role, divisome component that associates with the complex late in its assembly, after the Z-ring is formed, and is dependent on DivIC and PBP2B for its recruitment to the divisome. Together with EzrA, is a key component of the system that regulates PBP1 localization during cell cycle progression. Its main role could be the removal of PBP1 from the cell pole after pole maturation is completed. Also contributes to the recruitment of PBP1 to the division complex. Not essential for septum formation. In Geobacillus kaustophilus (strain HTA426), this protein is Cell cycle protein GpsB.